The primary structure comprises 541 residues: Acyl-CoA ligase M9 (541 aa).

186–197 contributes to the AMP binding site; it reads AMSTSGTTGLPK. Positions 445-519 are AMP-binding; it reads ELEAVLHQMP…DSLPRNSSGK (75 aa).

This sequence belongs to the ATP-dependent AMP-binding enzyme family.

It functions in the pathway secondary metabolite biosynthesis. Acyl-CoA ligase; part of the gene cluster that mediates the biosynthesis of squalestatin S1 (SQS1, also known as zaragozic acid A), a heavily oxidized fungal polyketide that offers potent cholesterol lowering activity by targeting squalene synthase (SS). SQS1 is composed of a 2,8-dioxobicyclic[3.2.1]octane-3,4,5-tricarboxyclic acid core that is connected to two lipophilic polyketide arms. These initial steps feature the priming of an unusual benzoic acid starter unit onto the highly reducing polyketide synthase pks2, followed by oxaloacetate extension and product release to generate a tricarboxylic acid containing product. The phenylalanine ammonia lyase (PAL) M7 and the acyl-CoA ligase M9 are involved in transforming phenylalanine into benzoyl-CoA. The citrate synthase-like protein R3 is involved in connecting the C-alpha-carbons of the hexaketide chain and oxaloacetate to afford the tricarboxylic acid unit. The potential hydrolytic enzymes, M8 and M10, are in close proximity to pks2 and may participate in product release. On the other side, the tetraketide arm is synthesized by a the squalestatin tetraketide synthase pks1 and enzymatically esterified to the core in the last biosynthetic step, by the acetyltransferase M4. The biosynthesis of the tetraketide must involve 3 rounds of chain extension. After the first and second rounds methyl-transfer occurs, and in all rounds of extension the ketoreductase and dehydratase are active. The enoyl reductase and C-MeT of pks1 are not active in the final round of extension. The acetyltransferase M4 appears to have a broad substrate selectivity for its acyl CoA substrate, allowing the in vitro synthesis of novel squalestatins. The biosynthesis of SQS1 requires several oxidative steps likely performed by oxidoreductases M1, R1 and R2. Finally, in support of the identification of the cluster as being responsible for SQS1 production, the cluster contains a gene encoding a putative squalene synthase (SS) R6, suggesting a likely mechanism for self-resistance. The protein is Acyl-CoA ligase M9 of Phoma sp. (strain ATCC 20986 / MF5453).